A 683-amino-acid polypeptide reads, in one-letter code: MALFVRLLALALALALGPAATLAGPAKSPYQLVLQHSRLRRQQHGPNVCAVQKVIGTNRKYFTNCKQWYQRKICGKSTVISYECCPGYEKVPGERSCPAALPLANLYETLGVVGSTTTQLYTDRTEKLRPEMEGPGRFTIFAPSNEAWASLPAEVLDSLVSNVNIELLNALRYHMVDRRVLTDELKHGMALTSMYQNSKFQIHHYPNGIVTVNCARLLKADHHATNGVVHLIDKVISTVTNNIQQIIEIEDTFETLRAAVAASGLNTLLESDGQFTLLAPTNEAKEKIPTETLNRILGDPEALRDLLNNHILKSAMCAEAIVAGLSMETLEATTLEVGCSGDMLTINGKAIISNKDVLATNGVIHFIDELLIPDSAKTLSELAAGSDVSTAIDLFGQAGLGTHLSGNERLTLLAPLNSVFEEGAPPIDAHTRNLLRNHIIKDQLASKYLYHGQTLDTLGGKKLRVFVYRNSLCIENSCIAAHDKRGRYGTLFTMDRMLTPPSGTVMDVLKGDNRFSMLVAAIQFRRLTETLNREGAYTVFAPTNEAFQALPPGELNKLLGNAKELADILKYHVGEEILVSGGIGTLVRLKSLQGDKLEVSSKNNAVSVNKEPVAESDIMATNGVVYAITSVLQPPANRPQERGDELADSALEIFKQASAFSRASQRSVRLAPVYQRLLERMKH.

Positions 1–23 are cleaved as a signal peptide; the sequence is MALFVRLLALALALALGPAATLA. Ser-37 carries the post-translational modification Phosphoserine. Residues 45–99 enclose the EMI domain; that stretch reads GPNVCAVQKVIGTNRKYFTNCKQWYQRKICGKSTVISYECCPGYEKVPGERSCPA. Intrachain disulfides connect Cys-49–Cys-85, Cys-74–Cys-339, Cys-84–Cys-97, Cys-214–Cys-317, and Cys-473–Cys-478. Position 65 is an S-cysteinyl cysteine (Cys-65). FAS1 domains lie at 103-236, 240-371, 375-498, and 502-632; these read LANL…DKVI, TNNI…DELL, SAKT…DRML, and SGTV…TSVL. The Cell attachment site motif lies at 642 to 644; sequence RGD.

As to quaternary structure, binds to type I, II, and IV collagens. In terms of processing, gamma-carboxylation is controversial. Gamma-carboxyglutamated; gamma-carboxyglutamate residues are formed by vitamin K dependent carboxylation; this may be required for calcium binding. According to a more recent report, does not contain vitamin K-dependent gamma-carboxyglutamate residues. Post-translationally, the EMI domain contains 2 expected intradomain disulfide bridges (Cys-49-Cys85 and Cys-84-Cys-97) and one unusual interdomain disulfide bridge to the second FAS1 domain (Cys-74-Cys-339). This arrangement violates the predicted disulfide bridge pattern of an EMI domain. Located primarily in the epithelium of normal adult cornea, in fetal stromal cells, and both endothelium- and stroma-derived cells in healing corneal wounds. Not expressed in normal adult endothelium and stroma.

It localises to the secreted. It is found in the extracellular space. Its subcellular location is the extracellular matrix. In terms of biological role, plays a role in cell adhesion. May play a role in cell-collagen interactions. This chain is Transforming growth factor-beta-induced protein ig-h3 (TGFBI), found in Oryctolagus cuniculus (Rabbit).